The sequence spans 100 residues: Glutamyl-tRNA(Gln) amidotransferase subunit C (100 aa).

It belongs to the GatC family. In terms of assembly, heterotrimer of A, B and C subunits.

The enzyme catalyses L-glutamyl-tRNA(Gln) + L-glutamine + ATP + H2O = L-glutaminyl-tRNA(Gln) + L-glutamate + ADP + phosphate + H(+). The catalysed reaction is L-aspartyl-tRNA(Asn) + L-glutamine + ATP + H2O = L-asparaginyl-tRNA(Asn) + L-glutamate + ADP + phosphate + 2 H(+). Allows the formation of correctly charged Asn-tRNA(Asn) or Gln-tRNA(Gln) through the transamidation of misacylated Asp-tRNA(Asn) or Glu-tRNA(Gln) in organisms which lack either or both of asparaginyl-tRNA or glutaminyl-tRNA synthetases. The reaction takes place in the presence of glutamine and ATP through an activated phospho-Asp-tRNA(Asn) or phospho-Glu-tRNA(Gln). This is Glutamyl-tRNA(Gln) amidotransferase subunit C from Streptococcus pyogenes serotype M1.